Consider the following 974-residue polypeptide: Toxin subunit YenC1 (974 aa).

9 RHS repeats span residues A165–Q179, G290–L304, F322–L336, V354–V368, N398–M412, S490–V504, N570–S584, S596–M610, and D630–P644. The interval Y600–L680 is RHS-repeat associated core domain. Positions I699–E940 are cytotoxic necrotising factor domain.

This sequence belongs to the RHS family. Semipurified toxin complex consists of at least YenA1-YenA2-YenB-YenC1-YenC2-Chi1-Chi2. The Yen-TC:K9 subcomplex is about 26 nm tall and 22 nm in diameter with 5-fold symmetry and 5 copies of YenA1, YenA2, Chi1 and Chi2; the chitinase subunits may be solvent accessible on the exterior the complex. The Yen-TC:K9 subcomplex has no insecticidal activity. The native complex with additional YenB, YenC1 and YenC2 subunits is 16 nm taller and is insecticidal; the toxicity-conferring subunits are present at about 1 copy each.

It is found in the secreted. Toxin complex is secreted when grown at 25 degrees Celsius or less; at higher temperatures the proteins are present intracellularly but not secreted. Its function is as follows. Part of an orally active toxin complex (TC) with strong insecticidal effects on larvae of the Coleoptera Costelytra zealandica, Acrossidius tasmania and Adoryphorus couloni and some Lepidoptera larvae. The TC has an endochitinase activity. The polypeptide is Toxin subunit YenC1 (Yersinia entomophaga).